A 357-amino-acid polypeptide reads, in one-letter code: MKRILSFIFIILFFNSSYAVEKAAIITDYKPIFLPVITENKKIKIAIRSYLKNKKSYFVLVDPNSFKTEIVLQELVILPANKIEKENLLIKLNKTSYIKALNKYNFIDQSLQSFKQDEFSNKFTDNTIVYEHKLNSKSSHSSTFMNSTVQQNYGATSSMYKVKGQFLTIDMCPSSKNFEEVFFKKLVELSTKLKKAIPITICVSGLWINKHTEEFLWLLKQQENGYLQITWVNHSFSHPYFKDKPLEDNFLLSNKDDFENEVLEVGKILVSYNIAPSPFFRFPGLVSDQTLIAKLKNFGFIPLGSNAWLAKGEKIQDGSFILVHGNSNEKAGIDLIMPMLSELKLLPIEKAFLPTNL.

A signal peptide spans 1-19 (MKRILSFIFIILFFNSSYA).

This is an uncharacterized protein from Rickettsia prowazekii (strain Madrid E).